Reading from the N-terminus, the 433-residue chain is Glutamate-1-semialdehyde 2,1-aminomutase (433 aa).

N6-(pyridoxal phosphate)lysine is present on Lys271.

Belongs to the class-III pyridoxal-phosphate-dependent aminotransferase family. HemL subfamily. As to quaternary structure, homodimer. Requires pyridoxal 5'-phosphate as cofactor.

It localises to the cytoplasm. The enzyme catalyses (S)-4-amino-5-oxopentanoate = 5-aminolevulinate. Its pathway is porphyrin-containing compound metabolism; protoporphyrin-IX biosynthesis; 5-aminolevulinate from L-glutamyl-tRNA(Glu): step 2/2. It participates in porphyrin-containing compound metabolism; chlorophyll biosynthesis. This Prochlorococcus marinus (strain MIT 9301) protein is Glutamate-1-semialdehyde 2,1-aminomutase.